The following is a 159-amino-acid chain: Pupal cuticle protein Edg-91 (159 aa).

The first 21 residues, 1–21 (MALVRVSCMLALLLIAGQGQA), serve as a signal peptide directing secretion.

As to expression, larval (posterior) and imaginal (anterior) epidermis.

Component of the pupal cuticle. In Drosophila melanogaster (Fruit fly), this protein is Pupal cuticle protein Edg-91 (Edg91).